The sequence spans 495 residues: 3-octaprenyl-4-hydroxybenzoate carboxy-lyase (495 aa).

Residue Asn172 participates in Mn(2+) binding. Prenylated FMN contacts are provided by residues 175-177, 189-191, and 194-195; these read IYR, RWL, and RG. Glu238 contacts Mn(2+). Asp287 acts as the Proton donor in catalysis.

Belongs to the UbiD family. In terms of assembly, homohexamer. Requires prenylated FMN as cofactor. The cofactor is Mn(2+).

The protein resides in the cell membrane. The catalysed reaction is a 4-hydroxy-3-(all-trans-polyprenyl)benzoate + H(+) = a 2-(all-trans-polyprenyl)phenol + CO2. It participates in cofactor biosynthesis; ubiquinone biosynthesis. Functionally, catalyzes the decarboxylation of 3-octaprenyl-4-hydroxy benzoate to 2-octaprenylphenol, an intermediate step in ubiquinone biosynthesis. The chain is 3-octaprenyl-4-hydroxybenzoate carboxy-lyase from Edwardsiella ictaluri (strain 93-146).